The sequence spans 92 residues: Cell division protein FtsB (92 aa).

The Cytoplasmic segment spans residues 1–3 (MRL). The chain crosses the membrane as a helical span at residues 4–21 (LILILLSVLVLFQYNFWF). Residues 22 to 92 (GSNGFLDYRQ…VFYHIVKESK (71 aa)) lie on the Periplasmic side of the membrane. A coiled-coil region spans residues 28–63 (DYRQNAEKIKENQAENEKLSQRNQRINAEIQGLTKG).

This sequence belongs to the FtsB family. In terms of assembly, part of a complex composed of FtsB, FtsL and FtsQ.

Its subcellular location is the cell inner membrane. Functionally, essential cell division protein. May link together the upstream cell division proteins, which are predominantly cytoplasmic, with the downstream cell division proteins, which are predominantly periplasmic. In Haemophilus influenzae (strain 86-028NP), this protein is Cell division protein FtsB.